The sequence spans 253 residues: ATP synthase subunit a (253 aa).

6 helical membrane-spanning segments follow: residues Ser34–Tyr54, Tyr89–Ile109, His118–Ile138, Leu156–Ser178, Leu203–Leu223, and Leu226–Leu246.

This sequence belongs to the ATPase A chain family. As to quaternary structure, F-type ATPases have 2 components, CF(1) - the catalytic core - and CF(0) - the membrane proton channel. CF(1) has five subunits: alpha(3), beta(3), gamma(1), delta(1), epsilon(1). CF(0) has three main subunits: a, b and c.

The protein localises to the mitochondrion inner membrane. Its function is as follows. Mitochondrial membrane ATP synthase (F(1)F(0) ATP synthase or Complex V) produces ATP from ADP in the presence of a proton gradient across the membrane which is generated by electron transport complexes of the respiratory chain. F-type ATPases consist of two structural domains, F(1) - containing the extramembraneous catalytic core and F(0) - containing the membrane proton channel, linked together by a central stalk and a peripheral stalk. During catalysis, ATP synthesis in the catalytic domain of F(1) is coupled via a rotary mechanism of the central stalk subunits to proton translocation. Key component of the proton channel; it may play a direct role in the translocation of protons across the membrane. This Chondrus crispus (Carrageen Irish moss) protein is ATP synthase subunit a (ATP6).